Reading from the N-terminus, the 174-residue chain is MTLRERAELKLGISGMPGVGKTTLVTKVLEVAKSKFAICGFITVEVRDGGKRIGFDIIDVNSGERKPFAREGIGMPSVGKYVINLGTCTLISKALRHKPCNLAIVDEIGAMEFKCPNFTTDLEEVVSNTPRILATIHRNYIGIAKRLGFEVIWLTRENWEMTYKQVLKRLGLSI.

ATP-binding positions include 15–22 (GMPGVGKT) and 102–109 (LAIVDEIG).

It belongs to the THEP1 NTPase family.

The catalysed reaction is a ribonucleoside 5'-triphosphate + H2O = a ribonucleoside 5'-diphosphate + phosphate + H(+). Its function is as follows. Has nucleotide phosphatase activity towards ATP, GTP, CTP, TTP and UTP. May hydrolyze nucleoside diphosphates with lower efficiency. The sequence is that of Nucleoside-triphosphatase THEP1 from Pyrobaculum islandicum (strain DSM 4184 / JCM 9189 / GEO3).